Here is a 240-residue protein sequence, read N- to C-terminus: UDP-2,3-diacylglucosamine hydrolase (240 aa).

The Mn(2+) site is built by D8, H10, D41, N79, and H114. 79-80 (NR) is a substrate binding site. Positions 122, 160, 164, 167, and 195 each coordinate substrate. Residues H195 and H197 each contribute to the Mn(2+) site.

This sequence belongs to the LpxH family. Mn(2+) serves as cofactor.

It localises to the cell inner membrane. The catalysed reaction is UDP-2-N,3-O-bis[(3R)-3-hydroxytetradecanoyl]-alpha-D-glucosamine + H2O = 2-N,3-O-bis[(3R)-3-hydroxytetradecanoyl]-alpha-D-glucosaminyl 1-phosphate + UMP + 2 H(+). It participates in glycolipid biosynthesis; lipid IV(A) biosynthesis; lipid IV(A) from (3R)-3-hydroxytetradecanoyl-[acyl-carrier-protein] and UDP-N-acetyl-alpha-D-glucosamine: step 4/6. Functionally, hydrolyzes the pyrophosphate bond of UDP-2,3-diacylglucosamine to yield 2,3-diacylglucosamine 1-phosphate (lipid X) and UMP by catalyzing the attack of water at the alpha-P atom. Involved in the biosynthesis of lipid A, a phosphorylated glycolipid that anchors the lipopolysaccharide to the outer membrane of the cell. This Escherichia coli (strain UTI89 / UPEC) protein is UDP-2,3-diacylglucosamine hydrolase.